Reading from the N-terminus, the 92-residue chain is RNA-binding protein Hfq (92 aa).

Positions 9–68 (DPYLNALRRERIPVSIYLVNGIKLQGQIESFDQFVILLKNTVSQMVYKHAISTVVPARSV) constitute a Sm domain. Positions 69–81 (SHNNGGTSHTQQA) are enriched in polar residues. The interval 69 to 92 (SHNNGGTSHTQQAPAVEAVADKAE) is disordered.

This sequence belongs to the Hfq family. In terms of assembly, homohexamer.

Its function is as follows. RNA chaperone that binds small regulatory RNA (sRNAs) and mRNAs to facilitate mRNA translational regulation in response to envelope stress, environmental stress and changes in metabolite concentrations. Also binds with high specificity to tRNAs. This is RNA-binding protein Hfq from Actinobacillus pleuropneumoniae serotype 5b (strain L20).